We begin with the raw amino-acid sequence, 131 residues long: Probable calcium-binding protein CML34 (131 aa).

4 EF-hand domains span residues 1-33, 34-69, 70-97, and 98-131; these read MSAK…FSPY, FTQE…MLKE, VFVF…LGKK, and FTEE…IGDI. Ca(2+) is bound by residues Asp-11, Asn-13, Asp-15, Lys-17, Glu-22, Asp-47, Asp-49, Asn-51, Glu-53, and Glu-58. Positions 111, 113, 115, 117, and 122 each coordinate Ca(2+).

In terms of biological role, potential calcium sensor. The protein is Probable calcium-binding protein CML34 (CML34) of Arabidopsis thaliana (Mouse-ear cress).